A 272-amino-acid polypeptide reads, in one-letter code: MSLPILSTTYAAENTVPASKSTYVVKNLNIGDLPVKTLVPITAKTREQALAQAKVIAENKDADIAEFRIDLLEFASDTKKVIALGQELNQILKDKPLLATIRTSNEGGKLKVTDQEYEKIYSEYLKKPFMQLLDIEMFRDQAAVAKLTKLAHQKKVLVVMSNHDFDKTPSEQEIVSRLLKQDQMGADILKIAVMPKSKQDVFTLMNATLKVSEQSTKPLLTMSMGRLGTISRIATANMGGSLSFGMIGEASAPGQIDVTALKQFLKTVQPTP.

3-dehydroquinate contacts are provided by residues 66–68 (EFR) and Arg-102. His-163 acts as the Proton donor/acceptor in catalysis. Catalysis depends on Lys-190, which acts as the Schiff-base intermediate with substrate. Residues Arg-232, Ser-251, and Gln-255 each coordinate 3-dehydroquinate.

The protein belongs to the type-I 3-dehydroquinase family.

It catalyses the reaction 3-dehydroquinate = 3-dehydroshikimate + H2O. The protein operates within aromatic compound metabolism; 3,4-dihydroxybenzoate biosynthesis; 3,4-dihydroxybenzoate from 3-dehydroquinate: step 1/2. Its function is as follows. Involved in the biosynthesis of protocatechuate. Catalyzes the catabolic dehydration of 3-dehydroquinate (DHQ) to yield 3-dehydroshikimate. The chain is Catabolic 3-dehydroquinate dehydratase from Acinetobacter baylyi (strain ATCC 33305 / BD413 / ADP1).